The primary structure comprises 574 residues: MAEFANASHEVINVTLGTTLAATTKLVMPTPAKPILPVQTGVQAQQEEQSSGMTIFFSLLVLAICIILVHLLIKYRLHFLPESVAVVSLGIIMGAFIKIIEAQKLANWKEEEMFRPNMFFLLLLPPIIFESGYSLHKGNFFQNIGSITLFSVFGTAISAFIVGGGIYFLGQADVIYKLNMTDSFAFGSLISAVDPVATIAIFNALNVDPVLNMLVFGESILNDAVSIVLTNTAEGLTRENMSDVSGWQTFLQALGYFLKMFFGSAALGTLTGLISALVLKHIDLRKTPSLEFGMMIIFAYLPYGLAEGISLSGIMAILFSGIVMSHYTHHNLSPVTQILMQQTLRTVAFMCETCVFAFLGLSIFSFPHKFEMSFVIWCIVLVLFGRAVNIFPLSYLLNFFRDHKITPKMMFIMWFSGLRGAIPYALSLHLGLEPIEKRQLIGTTTIIIVLFTVLLLGGGTMPLIRLIGIEDSKARKRNKKDVNLSKTEKMGNTIESEHLSELTEGEYEAQYIKRQDLKGFMWLDAKYLNPFFTRRLTQEDLHHGRIQMKTLTNKWYEEVRQGPSGSEDDEQELL.

Transmembrane regions (helical) follow at residues 53–73 (MTIF…HLLI), 77–97 (LHFL…GAFI), 116–136 (PNMF…YSLH), 149–169 (LFSV…IYFL), 184–204 (FAFG…IFNA), 254–274 (LGYF…TGLI), 304–324 (GLAE…GIVM), 347–367 (VAFM…FSFP), 373–393 (SFVI…IFPL), 410–430 (MFIM…SLHL), and 444–464 (TTII…MPLI).

The protein belongs to the monovalent cation:proton antiporter 1 (CPA1) transporter (TC 2.A.36) family.

It localises to the golgi apparatus membrane. Involved in pH regulation to eliminate acids generated by active metabolism or to counter adverse environmental conditions. Major proton extruding system driven by the inward sodium ion chemical gradient. Plays an important role in signal transduction. The chain is Sodium/hydrogen exchanger 8 from Gallus gallus (Chicken).